Consider the following 443-residue polypeptide: MVTLSLTPELLAKLQSRQPLLWVNPRLGQPLPASAPSLELIAAAEARLARCAPLMAALFPELASSHGQVESQLMPATGLQYALGEGAEGAWFIKRDDQLPTAGSIKARGGFHEVLAIAESIAIEHGMLDPDGDRRVLATEAARKLFSQYSVTVGSTGNLGLSIGVMAAALGFDAVVHMSADAKAWKKDRLRKRGVRVVEHEGDYAQAVAAGREQALGATRCHFVDDERSALLFFGYAAAARHLARQLAEAGRVVDAAHPLFVYLPCGVGGAPGGITYGLKALLGDHVHCFFAEPVASPCVLVQLASGSDDPVSVYDIGLDNRTDADGLAVGQASHLVSPLMASQLAGVFTVPDDQLYVQLLALKTSMGVEVEPSAAAGIGGPGWLRDSPEGRAYVRDHGLDMRDATHVIWATGGSLVPREELHRFQAYATALAHVPGAMHKAA.

Lys-106 is subject to N6-(pyridoxal phosphate)lysine.

This sequence belongs to the serine/threonine dehydratase family. DsdA subfamily. Pyridoxal 5'-phosphate serves as cofactor.

The enzyme catalyses D-serine = pyruvate + NH4(+). This chain is Probable D-serine dehydratase, found in Cupriavidus pinatubonensis (strain JMP 134 / LMG 1197) (Cupriavidus necator (strain JMP 134)).